The sequence spans 678 residues: Penicillin-binding protein activator LpoA (678 aa).

An N-terminal signal peptide occupies residues Met1–Gly26. Cys27 carries the N-palmitoyl cysteine lipid modification. Cys27 carries S-diacylglycerol cysteine lipidation. Low complexity predominate over residues Ala300–Gln310. Disordered stretches follow at residues Ala300–Ala340 and Ala496–Phe528. The span at Thr311–Thr327 shows a compositional bias: polar residues. 2 stretches are compositionally biased toward low complexity: residues Gln330–Ala340 and Thr513–Phe528.

The protein belongs to the LpoA family. In terms of assembly, interacts with PBP1a.

Its subcellular location is the cell outer membrane. Its function is as follows. Regulator of peptidoglycan synthesis that is essential for the function of penicillin-binding protein 1A (PBP1a). This is Penicillin-binding protein activator LpoA from Shigella flexneri serotype X (strain 2002017).